The sequence spans 342 residues: DNA-directed RNA polymerase subunit alpha (342 aa).

An alpha N-terminal domain (alpha-NTD) region spans residues 1 to 239 (MTTFLAKNWS…DQLQVFINFQ (239 aa)). An alpha C-terminal domain (alpha-CTD) region spans residues 254 to 342 (INPVLLKKVY…SLAKKHEDQY (89 aa)).

Belongs to the RNA polymerase alpha chain family. As to quaternary structure, homodimer. The RNAP catalytic core consists of 2 alpha, 1 beta, 1 beta' and 1 omega subunit. When a sigma factor is associated with the core the holoenzyme is formed, which can initiate transcription.

The enzyme catalyses RNA(n) + a ribonucleoside 5'-triphosphate = RNA(n+1) + diphosphate. Functionally, DNA-dependent RNA polymerase catalyzes the transcription of DNA into RNA using the four ribonucleoside triphosphates as substrates. This is DNA-directed RNA polymerase subunit alpha from Orientia tsutsugamushi (strain Ikeda) (Rickettsia tsutsugamushi).